Reading from the N-terminus, the 554-residue chain is 2-succinyl-5-enolpyruvyl-6-hydroxy-3-cyclohexene-1-carboxylate synthase (554 aa).

This sequence belongs to the TPP enzyme family. MenD subfamily. Homodimer. Mg(2+) is required as a cofactor. It depends on Mn(2+) as a cofactor. Thiamine diphosphate serves as cofactor.

The enzyme catalyses isochorismate + 2-oxoglutarate + H(+) = 5-enolpyruvoyl-6-hydroxy-2-succinyl-cyclohex-3-ene-1-carboxylate + CO2. Its pathway is quinol/quinone metabolism; 1,4-dihydroxy-2-naphthoate biosynthesis; 1,4-dihydroxy-2-naphthoate from chorismate: step 2/7. The protein operates within quinol/quinone metabolism; menaquinone biosynthesis. In terms of biological role, catalyzes the thiamine diphosphate-dependent decarboxylation of 2-oxoglutarate and the subsequent addition of the resulting succinic semialdehyde-thiamine pyrophosphate anion to isochorismate to yield 2-succinyl-5-enolpyruvyl-6-hydroxy-3-cyclohexene-1-carboxylate (SEPHCHC). In Mycobacterium tuberculosis (strain ATCC 25177 / H37Ra), this protein is 2-succinyl-5-enolpyruvyl-6-hydroxy-3-cyclohexene-1-carboxylate synthase.